Consider the following 159-residue polypeptide: SsrA-binding protein (159 aa).

Residues 132 to 159 are disordered; sequence KDFDKRHTEKERDSDREIQRAMRHGKDD.

Belongs to the SmpB family.

The protein localises to the cytoplasm. Functionally, required for rescue of stalled ribosomes mediated by trans-translation. Binds to transfer-messenger RNA (tmRNA), required for stable association of tmRNA with ribosomes. tmRNA and SmpB together mimic tRNA shape, replacing the anticodon stem-loop with SmpB. tmRNA is encoded by the ssrA gene; the 2 termini fold to resemble tRNA(Ala) and it encodes a 'tag peptide', a short internal open reading frame. During trans-translation Ala-aminoacylated tmRNA acts like a tRNA, entering the A-site of stalled ribosomes, displacing the stalled mRNA. The ribosome then switches to translate the ORF on the tmRNA; the nascent peptide is terminated with the 'tag peptide' encoded by the tmRNA and targeted for degradation. The ribosome is freed to recommence translation, which seems to be the essential function of trans-translation. The chain is SsrA-binding protein from Pseudomonas aeruginosa (strain LESB58).